A 152-amino-acid chain; its full sequence is Large ribosomal subunit protein uL22 (152 aa).

It belongs to the universal ribosomal protein uL22 family. In terms of assembly, part of the 50S ribosomal subunit.

Its function is as follows. This protein binds specifically to 23S rRNA. It makes multiple contacts with different domains of the 23S rRNA in the assembled 50S subunit and ribosome. The globular domain of the protein is located near the polypeptide exit tunnel on the outside of the subunit, while an extended beta-hairpin is found that lines the wall of the exit tunnel in the center of the 70S ribosome. The chain is Large ribosomal subunit protein uL22 from Nitrosopumilus maritimus (strain SCM1).